Consider the following 201-residue polypeptide: MEADIQLMRLIQEMRAEIHKLEKENQALRMKLTASSQRASGSGRESGDEREEEAPGQSPATLQGAVSTDAAPAVQEHQGNVMIVRRYSISSSVCSSAVNDPWKSGKSHPKSGILEGQRTLKSLACSPIKKQDMEEKVFATDSLTSNRTSQRASPEHVCGCRDKTKAVSFLLPMDMSSYSKNSSSLKHSPNQATNQLSIIAE.

Positions 4-38 (DIQLMRLIQEMRAEIHKLEKENQALRMKLTASSQR) form a coiled coil. Disordered stretches follow at residues 28 to 72 (LRMK…DAAP) and 179 to 201 (SKNSSSLKHSPNQATNQLSIIAE). Positions 179 to 188 (SKNSSSLKHS) are enriched in low complexity. The span at 189-201 (PNQATNQLSIIAE) shows a compositional bias: polar residues.

This is Coiled-coil domain-containing protein 195 from Homo sapiens (Human).